A 135-amino-acid chain; its full sequence is Fatty acid-binding protein homolog 6 (135 aa).

Residues R110 and 130–132 contribute to the a fatty acid site; that span reads REY.

This sequence belongs to the calycin superfamily. Fatty-acid binding protein (FABP) family.

This chain is Fatty acid-binding protein homolog 6 (lbp-6), found in Caenorhabditis elegans.